We begin with the raw amino-acid sequence, 259 residues long: MSHEHVNFPVYGQVDYFKQQQPQQPQYNPHLGGKQKTLDPIVTGTSVIAIKYDKGVVMGSDMLLSYGSLARFNSTERMKKFGGYTIVGASGEYSDFQSITNTLNDLVTDDHCMDDGSKLSSEEIWNYLARVLYNQRNRGNPLWNTLVVMGYQGGKSFLGKVDLVGTCYKDDIITTGYGSHIALPLLRKARDENPNMNLEQAKQLIQDCLRVLFYRDARSSKKIQISVAGEEGIEISGPIELDTFHWNSGEAAVKNFSQV.

It belongs to the peptidase T1B family. The 26S proteasome consists of a 20S proteasome core and two 19S regulatory subunits. The 20S proteasome core is composed of 28 subunits that are arranged in four stacked rings, resulting in a barrel-shaped structure. The two end rings are each formed by seven alpha subunits, and the two central rings are each formed by seven beta subunits. The catalytic chamber with the active sites is on the inside of the barrel.

It localises to the cytoplasm. It is found in the nucleus. In terms of biological role, non-catalytic component of the proteasome, a multicatalytic proteinase complex which is characterized by its ability to cleave peptides with Arg, Phe, Tyr, Leu, and Glu adjacent to the leaving group at neutral or slightly basic pH. The proteasome has an ATP-dependent proteolytic activity. In Dictyostelium discoideum (Social amoeba), this protein is Proteasome subunit beta type-4 (psmB4-1).